The primary structure comprises 765 residues: LPS-assembly protein LptD (765 aa).

The N-terminal stretch at 1–18 (MQIRYFLALSLLPQLVLA) is a signal peptide.

The protein belongs to the LptD family. As to quaternary structure, component of the lipopolysaccharide transport and assembly complex. Interacts with LptE and LptA.

It is found in the cell outer membrane. Functionally, together with LptE, is involved in the assembly of lipopolysaccharide (LPS) at the surface of the outer membrane. This Shewanella sp. (strain MR-4) protein is LPS-assembly protein LptD.